The chain runs to 93 residues: Beta-defensin 128 (93 aa).

A signal peptide spans Met1–Gly18. 3 cysteine pairs are disulfide-bonded: Cys24/Cys52, Cys32/Cys46, and Cys36/Cys53.

This sequence belongs to the beta-defensin family.

The protein localises to the secreted. Its function is as follows. Has antibacterial activity. The protein is Beta-defensin 128 (DEFB128) of Homo sapiens (Human).